Consider the following 424-residue polypeptide: Tyrosine--tRNA ligase (424 aa).

Y37 is a binding site for L-tyrosine. The 'HIGH' region signature appears at 42–51 (PTADSLHLGH). Residues Y175 and Q179 each coordinate L-tyrosine. The 'KMSKS' region motif lies at 235–239 (KFGKT). Residue K238 participates in ATP binding. The region spanning 357-414 (ADLMQALVDAELQPSRGQARKTIASNAVTINGEKQSDPEYIFNDEDRLFGRYTLLRRG) is the S4 RNA-binding domain.

It belongs to the class-I aminoacyl-tRNA synthetase family. TyrS type 1 subfamily. As to quaternary structure, homodimer.

The protein localises to the cytoplasm. The catalysed reaction is tRNA(Tyr) + L-tyrosine + ATP = L-tyrosyl-tRNA(Tyr) + AMP + diphosphate + H(+). Its function is as follows. Catalyzes the attachment of tyrosine to tRNA(Tyr) in a two-step reaction: tyrosine is first activated by ATP to form Tyr-AMP and then transferred to the acceptor end of tRNA(Tyr). The chain is Tyrosine--tRNA ligase from Salmonella agona (strain SL483).